We begin with the raw amino-acid sequence, 456 residues long: Phospholipase A1 member A (456 aa).

Residues 1-24 (MCPGLWGTCFWLWGSLLWLSIGRS) form the signal peptide. The active-site Nucleophile is Ser-166. Asp-190 acts as the Charge relay system in catalysis. Residues Cys-245 and Cys-258 are joined by a disulfide bond. Residue His-260 is the Charge relay system of the active site. Intrachain disulfides connect Cys-282/Cys-293 and Cys-296/Cys-304. The N-linked (GlcNAc...) asparagine glycan is linked to Asn-365.

It belongs to the AB hydrolase superfamily. Lipase family.

The protein resides in the secreted. The enzyme catalyses a 1,2-diacyl-sn-glycero-3-phospho-L-serine + H2O = a 2-acyl-sn-glycero-3-phospho-L-serine + a fatty acid + H(+). The catalysed reaction is 1,2-di-(9Z)-octadecenoyl-sn-glycero-3-phospho-L-serine + H2O = 2-(9Z-octadecenoyl)-sn-glycero-3-phospho-L-serine + (9Z)-octadecenoate + H(+). It catalyses the reaction 1-hexadecanoyl-2-(5Z,8Z,11Z,14Z-eicosatetraenoyl)-sn-glycero-3-phospho-L-serine + H2O = 2-(5Z,8Z,11Z,14Z)-eicosatetraenoyl-sn-glycero-3-phospho-L-serine + hexadecanoate + H(+). It carries out the reaction a 1-acyl-sn-glycero-3-phospho-L-serine + H2O = sn-glycero-3-phospho-L-serine + a fatty acid + H(+). The enzyme catalyses 1-(9Z-octadecenoyl)-sn-glycero-3-phospho-L-serine + H2O = sn-glycero-3-phospho-L-serine + (9Z)-octadecenoate + H(+). Functionally, hydrolyzes the ester bond of the acyl group attached at the sn-1 position of phosphatidylserines (phospholipase A1 activity) and 1-acyl-2-lysophosphatidylserines (lysophospholipase activity) in the pathway of phosphatidylserines acyl chain remodeling. Cleaves phosphatidylserines exposed on the outer leaflet of the plasma membrane of apoptotic cells producing 2-acyl-1-lysophosphatidylserines, which in turn enhance mast cell activation and histamine production. Has no activity toward other glycerophospholipids including phosphatidylcholines, phosphatidylethanolamines, phosphatidic acids or phosphatidylinositols, or glycerolipids such as triolein. This Rattus norvegicus (Rat) protein is Phospholipase A1 member A.